A 193-amino-acid chain; its full sequence is Hypoxanthine/guanine phosphoribosyltransferase (193 aa).

Belongs to the purine/pyrimidine phosphoribosyltransferase family. Archaeal HPRT subfamily. As to quaternary structure, homodimer.

Its subcellular location is the cytoplasm. The catalysed reaction is IMP + diphosphate = hypoxanthine + 5-phospho-alpha-D-ribose 1-diphosphate. The enzyme catalyses GMP + diphosphate = guanine + 5-phospho-alpha-D-ribose 1-diphosphate. Its pathway is purine metabolism; IMP biosynthesis via salvage pathway; IMP from hypoxanthine: step 1/1. Catalyzes a salvage reaction resulting in the formation of IMP that is energically less costly than de novo synthesis. Prefers hypoxanthine, has 66% activity with guanine while activity with adenine, xanthine, uracil, orotate, or cytosine is negligible. The chain is Hypoxanthine/guanine phosphoribosyltransferase from Methanothermobacter marburgensis (strain ATCC BAA-927 / DSM 2133 / JCM 14651 / NBRC 100331 / OCM 82 / Marburg) (Methanobacterium thermoautotrophicum).